A 202-amino-acid polypeptide reads, in one-letter code: tRNA (guanine-N(7)-)-methyltransferase (202 aa).

S-adenosyl-L-methionine-binding residues include glutamate 34, glutamate 59, aspartate 86, and aspartate 107. The active site involves aspartate 107. Substrate is bound by residues lysine 111, aspartate 143, and 181–184 (TDYE).

This sequence belongs to the class I-like SAM-binding methyltransferase superfamily. TrmB family.

It carries out the reaction guanosine(46) in tRNA + S-adenosyl-L-methionine = N(7)-methylguanosine(46) in tRNA + S-adenosyl-L-homocysteine. The protein operates within tRNA modification; N(7)-methylguanine-tRNA biosynthesis. Catalyzes the formation of N(7)-methylguanine at position 46 (m7G46) in tRNA. This is tRNA (guanine-N(7)-)-methyltransferase from Metamycoplasma hominis (strain ATCC 23114 / DSM 25592 / NBRC 14850 / NCTC 10111 / PG21) (Mycoplasma hominis).